Reading from the N-terminus, the 252-residue chain is 5-oxoprolinase subunit A (252 aa).

Belongs to the LamB/PxpA family. As to quaternary structure, forms a complex composed of PxpA, PxpB and PxpC.

It carries out the reaction 5-oxo-L-proline + ATP + 2 H2O = L-glutamate + ADP + phosphate + H(+). Catalyzes the cleavage of 5-oxoproline to form L-glutamate coupled to the hydrolysis of ATP to ADP and inorganic phosphate. This Mycobacterium leprae (strain Br4923) protein is 5-oxoprolinase subunit A.